A 417-amino-acid chain; its full sequence is D-galactonate dehydratase family member SeV_A0456 (417 aa).

Substrate is bound by residues glutamine 43 and histidine 127. Residue tyrosine 158 is the Proton donor/acceptor of the active site. Aspartate 223 lines the Mg(2+) pocket. Histidine 225 acts as the Proton donor/acceptor in catalysis. Mg(2+) is bound by residues glutamate 249 and glutamate 275. Substrate-binding residues include glutamate 275, arginine 296, histidine 325, aspartate 329, and glutamate 352.

The protein belongs to the mandelate racemase/muconate lactonizing enzyme family. GalD subfamily. Requires Mg(2+) as cofactor.

It catalyses the reaction D-gluconate = 2-dehydro-3-deoxy-D-gluconate + H2O. Its function is as follows. Has low D-gluconate dehydratase activity (in vitro), suggesting that it has no significant role in D-gluconate degradation in vivo. Has no detectable activity with a panel of 70 other acid sugars (in vitro). The polypeptide is D-galactonate dehydratase family member SeV_A0456 (Salmonella virchow (strain SL491)).